We begin with the raw amino-acid sequence, 240 residues long: UDP-2,3-diacylglucosamine hydrolase (240 aa).

Positions 8, 10, 41, 79, and 114 each coordinate Mn(2+). Substrate is bound at residue 79-80 (NR). Positions 122, 160, 164, 167, and 195 each coordinate substrate. Mn(2+) is bound by residues histidine 195 and histidine 197.

This sequence belongs to the LpxH family. Mn(2+) serves as cofactor.

Its subcellular location is the cell inner membrane. The enzyme catalyses UDP-2-N,3-O-bis[(3R)-3-hydroxytetradecanoyl]-alpha-D-glucosamine + H2O = 2-N,3-O-bis[(3R)-3-hydroxytetradecanoyl]-alpha-D-glucosaminyl 1-phosphate + UMP + 2 H(+). It functions in the pathway glycolipid biosynthesis; lipid IV(A) biosynthesis; lipid IV(A) from (3R)-3-hydroxytetradecanoyl-[acyl-carrier-protein] and UDP-N-acetyl-alpha-D-glucosamine: step 4/6. Functionally, hydrolyzes the pyrophosphate bond of UDP-2,3-diacylglucosamine to yield 2,3-diacylglucosamine 1-phosphate (lipid X) and UMP by catalyzing the attack of water at the alpha-P atom. Involved in the biosynthesis of lipid A, a phosphorylated glycolipid that anchors the lipopolysaccharide to the outer membrane of the cell. The polypeptide is UDP-2,3-diacylglucosamine hydrolase (Pseudomonas paraeruginosa (strain DSM 24068 / PA7) (Pseudomonas aeruginosa (strain PA7))).